The chain runs to 293 residues: ATP synthase gamma chain (293 aa).

This sequence belongs to the ATPase gamma chain family. In terms of assembly, F-type ATPases have 2 components, CF(1) - the catalytic core - and CF(0) - the membrane proton channel. CF(1) has five subunits: alpha(3), beta(3), gamma(1), delta(1), epsilon(1). CF(0) has three main subunits: a, b and c.

It localises to the cell inner membrane. Functionally, produces ATP from ADP in the presence of a proton gradient across the membrane. The gamma chain is believed to be important in regulating ATPase activity and the flow of protons through the CF(0) complex. The sequence is that of ATP synthase gamma chain from Psychrobacter arcticus (strain DSM 17307 / VKM B-2377 / 273-4).